The following is a 216-amino-acid chain: Orotidine 5'-phosphate decarboxylase (216 aa).

Residues D12, K34, 62–71 (DFKVADIDAT), S119, 172–182 (PGVGFQGGNAK), G194, and R195 each bind substrate. The active-site Proton donor is the K64.

The protein belongs to the OMP decarboxylase family. Type 1 subfamily. As to quaternary structure, homodimer.

It catalyses the reaction orotidine 5'-phosphate + H(+) = UMP + CO2. It participates in pyrimidine metabolism; UMP biosynthesis via de novo pathway; UMP from orotate: step 2/2. Functionally, catalyzes the decarboxylation of orotidine 5'-monophosphate (OMP) to uridine 5'-monophosphate (UMP). The sequence is that of Orotidine 5'-phosphate decarboxylase from Methanosphaera stadtmanae (strain ATCC 43021 / DSM 3091 / JCM 11832 / MCB-3).